A 433-amino-acid chain; its full sequence is Phosphomethylpyrimidine synthase 1 (433 aa).

Residues Met-95, Tyr-124, His-163, 185–187 (SRG), 226–229 (NAMR), and Glu-265 contribute to the substrate site. Zn(2+) is bound at residue His-269. Substrate is bound at residue Tyr-292. A Zn(2+)-binding site is contributed by His-333. [4Fe-4S] cluster-binding residues include Cys-408, Cys-411, and Cys-415.

The protein belongs to the ThiC family. [4Fe-4S] cluster is required as a cofactor.

The enzyme catalyses 5-amino-1-(5-phospho-beta-D-ribosyl)imidazole + S-adenosyl-L-methionine = 4-amino-2-methyl-5-(phosphooxymethyl)pyrimidine + CO + 5'-deoxyadenosine + formate + L-methionine + 3 H(+). Its pathway is cofactor biosynthesis; thiamine diphosphate biosynthesis. Its function is as follows. Catalyzes the synthesis of the hydroxymethylpyrimidine phosphate (HMP-P) moiety of thiamine from aminoimidazole ribotide (AIR) in a radical S-adenosyl-L-methionine (SAM)-dependent reaction. The sequence is that of Phosphomethylpyrimidine synthase 1 from Methanothermobacter thermautotrophicus (strain ATCC 29096 / DSM 1053 / JCM 10044 / NBRC 100330 / Delta H) (Methanobacterium thermoautotrophicum).